Here is a 446-residue protein sequence, read N- to C-terminus: MNAQEANFDGLVGPTHNYAGLSFGNVASLNNEKSAANPKAAAKQGLRKMKQLADLGFAQGVLPPQERPSLRLLRELGFSGKDADVIAKAAKQAPELLAAASSASAMWTANAATVSPSADTGDGRVHFTPANLCSKLHRAIEHDATRRTLSTLFADPAHFAVHEALTGTPALGDEGAANHTRFCAEYGKPGVEFFVYGRAEYRRGPEPKRFPARQTFEASRAVAQRHGLDETATVYAQQDPDVIDAGVFHNDVISVGNRDTLFTHERAFVNKQAIYDTLTATLDARGARLNVIEVPDAAVSVNDAVTSYLFNSQLLSRADGSQVLVVPQECRENAKVAAYLDELAAGNGPIRDVLVFDLRESMKNGGGPACLRLRVVLNDAERAAVTSNVWMNDTLFASLDAWIEKHYRDRLAPEDLADPTLLDESRTALDELTQILRVGSLYDFQR.

Residues 19-28 (AGLSFGNVAS), N110, and 137-138 (HR) each bind substrate. E174 is an active-site residue. Position 213 (R213) interacts with substrate. Residue H249 is part of the active site. Substrate-binding residues include D251 and N364. C370 serves as the catalytic Nucleophile.

It belongs to the succinylarginine dihydrolase family. Homodimer.

It carries out the reaction N(2)-succinyl-L-arginine + 2 H2O + 2 H(+) = N(2)-succinyl-L-ornithine + 2 NH4(+) + CO2. It participates in amino-acid degradation; L-arginine degradation via AST pathway; L-glutamate and succinate from L-arginine: step 2/5. Functionally, catalyzes the hydrolysis of N(2)-succinylarginine into N(2)-succinylornithine, ammonia and CO(2). This is N-succinylarginine dihydrolase from Burkholderia ambifaria (strain ATCC BAA-244 / DSM 16087 / CCUG 44356 / LMG 19182 / AMMD) (Burkholderia cepacia (strain AMMD)).